Here is a 736-residue protein sequence, read N- to C-terminus: MSNIISQAGQKAKEALTSAPSSKKVDDLKNEFKETDKSARLTTDYGVKQTTADDWLRIVSDDKIGPSLLEDPFARERIMRFDHERIPERVVHARGSGAFGKFKVYESASDLTMAPVLTDTSRETPVFVRFSTVLGSRGSADTVRDVRGFAVKFYTEEGNWDLVGNNIPVFFIQDAIKFPDVIHAGKPEPHNEVPQAQSAHNNFWDFQFNHTEATHMFTWAMSDRAIPRSLRMMQGFGVNTYTLINAQGKRHFVKFHWTPELGVHSLVWDEALKLAGQDPDFHRKDLWEAIENGAYPKWKFGIQAIAEEDEHKFDFDILDATKIWPEDLVPVRYIGEMELNRNPDEFFPQTEQIAFCTSHVVNGIGFSDDPLLQGRNFSYFDTQISRLGVNFQELPINRPVCPVMNFNRDGAMRHTISRGTVNYYPNRFDACPPASLKEGGYLEYAQKVAGIKARARSAKFKEHFSQAQLFYNSMSPIEKQHMINAFGFELDHCEDPVVYGRMVQRLADIDLGLAQTIAEMVGGEAPTTTNHPNHGRKTINLSQTEFPPATPTIKSRRVAIIIADGYDNVAYDAAYAAISANQAIPLVIGPRRSKVTAANGSTVQPHHHLEGFRSTMVDAIFIPGGAKAAETLSKNGRALHWIREAFGHLKAIGATGEAVDLVAKAIALPQVTVSSEAEVHESYGVVTLKKVKPESFTDAVKIAKGAAGFLGEFFYAIAQHRNWDRELDGLHSMIAY.

The segment at 1–29 is disordered; sequence MSNIISQAGQKAKEALTSAPSSKKVDDLK. Residue arginine 89 participates in heme binding. Residue histidine 92 is part of the active site. Arginine 129 serves as a coordination point for heme. Residue asparagine 165 is part of the active site. Residues phenylalanine 178, arginine 375, tyrosine 379, and arginine 386 each coordinate heme. Residues 356 to 379 constitute a cross-link (3-(S-cysteinyl)-tyrosine (Cys-Tyr)); the sequence is CTSHVVNGIGFSDDPLLQGRNFSY.

Belongs to the catalase family. Homotetramer. Requires heme as cofactor. Glycosylated; with alpha-glucose and/or alpha-mannose.

It localises to the secreted. It is found in the cell wall. The catalysed reaction is 2 H2O2 = O2 + 2 H2O. In terms of biological role, occurs in almost all aerobically respiring organisms and serves to protect cells from the toxic effects of hydrogen peroxide. The sequence is that of Catalase-1 (cat-1) from Neurospora crassa (strain ATCC 24698 / 74-OR23-1A / CBS 708.71 / DSM 1257 / FGSC 987).